Consider the following 205-residue polypeptide: Holliday junction branch migration complex subunit RuvA (205 aa).

Positions 1–64 (MIGKLKGVID…EDMIRLYGFA (64 aa)) are domain I. The domain II stretch occupies residues 65–143 (TQLEREWFRL…AFAGEASGTI (79 aa)). The tract at residues 144-152 (GLKQELGAG) is flexible linker. The domain III stretch occupies residues 153 to 205 (AAPAPVADAVSALSNLGYSRDQAANAVAAALKETGEGADSAKLIRLGLKELSQ).

This sequence belongs to the RuvA family. As to quaternary structure, homotetramer. Forms an RuvA(8)-RuvB(12)-Holliday junction (HJ) complex. HJ DNA is sandwiched between 2 RuvA tetramers; dsDNA enters through RuvA and exits via RuvB. An RuvB hexamer assembles on each DNA strand where it exits the tetramer. Each RuvB hexamer is contacted by two RuvA subunits (via domain III) on 2 adjacent RuvB subunits; this complex drives branch migration. In the full resolvosome a probable DNA-RuvA(4)-RuvB(12)-RuvC(2) complex forms which resolves the HJ.

It localises to the cytoplasm. The RuvA-RuvB-RuvC complex processes Holliday junction (HJ) DNA during genetic recombination and DNA repair, while the RuvA-RuvB complex plays an important role in the rescue of blocked DNA replication forks via replication fork reversal (RFR). RuvA specifically binds to HJ cruciform DNA, conferring on it an open structure. The RuvB hexamer acts as an ATP-dependent pump, pulling dsDNA into and through the RuvAB complex. HJ branch migration allows RuvC to scan DNA until it finds its consensus sequence, where it cleaves and resolves the cruciform DNA. This is Holliday junction branch migration complex subunit RuvA from Brucella abortus (strain S19).